The primary structure comprises 140 residues: Small ribosomal subunit protein uS19 (140 aa).

The interval 55–74 (LAEARESGTEETANNPIRTH) is disordered.

This sequence belongs to the universal ribosomal protein uS19 family.

Protein S19 forms a complex with S13 that binds strongly to the 16S ribosomal RNA. This chain is Small ribosomal subunit protein uS19, found in Halobacterium salinarum (strain ATCC 29341 / DSM 671 / R1).